The chain runs to 938 residues: ATP-dependent RNA helicase DDX42 (938 aa).

Positions 1-18 (MNWNKGGPGTKRGFGFGG) are enriched in gly residues. Positions 1 to 114 (MNWNKGGPGT…KPVDSDSDDD (114 aa)) are disordered. N6-acetyllysine is present on K5. R12 bears the Omega-N-methylarginine mark. Low complexity predominate over residues 35–52 (SHSAFGATSSSSGFGKSA). S58 bears the Phosphoserine mark. Positions 70-84 (DEENAYFEDEEEDSS) are enriched in acidic residues. Phosphoserine is present on residues S96, S104, S109, and S111. Positions 116-157 (LEAFMAEVEDQAARDMKRLEEKDKERKNVKGIRDDIEEEDDQ) form a coiled coil. Residues 182 to 203 (EYDSDGNPIAPTKKIIDPLPPI) form a disordered region. S185 is modified (phosphoserine). Residues 253-281 (SSFAHFGFDEQLMHQIRKSEYTQPTPIQC) carry the Q motif motif. A Helicase ATP-binding domain is found at 284–459 (VPVALSGRDM…RDILIDPIRV (176 aa)). 297-304 (AKTGSGKT) contributes to the ATP binding site. The short motif at 407–410 (DEAD) is the DEAD box element. In terms of domain architecture, Helicase C-terminal spans 487–632 (WLTRRLVEFT…HVSKELLDLA (146 aa)). 2 stretches are compositionally biased toward polar residues: residues 737-757 (LNSV…SPVT) and 786-798 (GVNN…NSRE). Residues 737–938 (LNSVPTNSAQ…PKRKKSRWDS (202 aa)) are disordered. The tract at residues 738-833 (NSVPTNSAQQ…TGNRHSDSPR (96 aa)) is necessary for interaction with TP53BP2. The residue at position 754 (S754) is a Phosphoserine. Over residues 820-920 (SHGETGNRHS…KVDSKTDKTA (101 aa)) the composition is skewed to basic and acidic residues. K899 is covalently cross-linked (Glycyl lysine isopeptide (Lys-Gly) (interchain with G-Cter in SUMO2)).

It belongs to the DEAD box helicase family. DDX42 subfamily. In terms of assembly, transient component of the SF3B subcomplex of the 17S U2 SnRNP complex. Interacts (via the C-terminus) with TP53BP2; the interaction is not inhibitied by TP53BP2 ubiquitination and is independent of p53/TP53. As to expression, expressed in several cell lines (at protein level). Expressed in liver, lung, tonsil, thymus, muscle and pancreatic islets.

It is found in the cytoplasm. Its subcellular location is the nucleus. The protein resides in the cajal body. The protein localises to the nucleus speckle. The catalysed reaction is ATP + H2O = ADP + phosphate + H(+). ATP-dependent RNA helicase that binds to partially double-stranded RNAs (dsRNAs) in order to unwind RNA secondary structures. Unwinding is promoted in the presence of single-strand binding proteins. Also mediates RNA duplex formation thereby displacing the single-strand RNA binding protein. ATP and ADP modulate its activity: ATP binding and hydrolysis by DDX42 triggers RNA strand separation, whereas the ADP-bound form of the protein triggers annealing of complementary RNA strands. Required for assembly of the 17S U2 SnRNP complex of the spliceosome, a large ribonucleoprotein complex that removes introns from transcribed pre-mRNAs: DDX42 associates transiently with the SF3B subcomplex of the 17S U2 SnRNP complex and is released after fulfilling its role in the assembly of 17S U2 SnRNP. Involved in the survival of cells by interacting with TP53BP2 and thereby counteracting the apoptosis-stimulating activity of TP53BP2. Relocalizes TP53BP2 to the cytoplasm. This is ATP-dependent RNA helicase DDX42 from Homo sapiens (Human).